Reading from the N-terminus, the 257-residue chain is Transmembrane protein 101 (257 aa).

8 consecutive transmembrane segments (helical) span residues Val-21–Glu-40, Val-52–Gly-72, Trp-77–Gly-97, Tyr-110–Leu-130, Ser-139–Leu-159, Leu-182–Leu-202, Ile-206–His-226, and Phe-233–Leu-253.

The protein localises to the membrane. Functionally, may activate NF-kappa-B signaling pathways. The polypeptide is Transmembrane protein 101 (TMEM101) (Bos taurus (Bovine)).